The chain runs to 71 residues: Putative antitoxin VapB15 (71 aa).

Belongs to the UPF0330 family.

Its function is as follows. Possibly the antitoxin component of a type II toxin-antitoxin (TA) system. Its cognate toxin is VapC15 (Potential). In Archaeoglobus fulgidus (strain ATCC 49558 / DSM 4304 / JCM 9628 / NBRC 100126 / VC-16), this protein is Putative antitoxin VapB15 (vapB15).